A 357-amino-acid polypeptide reads, in one-letter code: Phosphoserine aminotransferase (357 aa).

Arg-41 provides a ligand contact to L-glutamate. Pyridoxal 5'-phosphate is bound by residues 75–76 (GT), Trp-100, Thr-150, Asp-170, and Gln-193. Lys-194 bears the N6-(pyridoxal phosphate)lysine mark. 234-235 (NT) provides a ligand contact to pyridoxal 5'-phosphate.

It belongs to the class-V pyridoxal-phosphate-dependent aminotransferase family. SerC subfamily. As to quaternary structure, homodimer. The cofactor is pyridoxal 5'-phosphate.

It localises to the cytoplasm. The enzyme catalyses O-phospho-L-serine + 2-oxoglutarate = 3-phosphooxypyruvate + L-glutamate. It carries out the reaction 4-(phosphooxy)-L-threonine + 2-oxoglutarate = (R)-3-hydroxy-2-oxo-4-phosphooxybutanoate + L-glutamate. Its pathway is amino-acid biosynthesis; L-serine biosynthesis; L-serine from 3-phospho-D-glycerate: step 2/3. Catalyzes the reversible conversion of 3-phosphohydroxypyruvate to phosphoserine and of 3-hydroxy-2-oxo-4-phosphonooxybutanoate to phosphohydroxythreonine. The sequence is that of Phosphoserine aminotransferase from Lactiplantibacillus plantarum (strain ATCC BAA-793 / NCIMB 8826 / WCFS1) (Lactobacillus plantarum).